The following is a 216-amino-acid chain: Ras-related protein Rab-5C (216 aa).

GTP is bound by residues Ser30, Ala31, Gly33, Lys34, Ser35, Ser36, His47, Glu48, Thr53, and Gly79. A Mg(2+)-binding site is contributed by Ser35. Short sequence motifs (switch) lie at residues 45–57 and 78–94; these read QFHEYQESTIGAA and AGQERYHSLAPMYYRGA. Residue Thr53 participates in Mg(2+) binding. Position 85 is a phosphoserine (Ser85). GTP-binding residues include Asn134, Lys135, Asp137, Ala165, and Lys166. The tract at residues 185–216 is disordered; that stretch reads NEPQNAAGAPGRNRGVDLQENNPASRSQCCSN. Residues 203-216 are compositionally biased toward polar residues; sequence QENNPASRSQCCSN. Residues Cys213 and Cys214 are each lipidated (S-geranylgeranyl cysteine).

It belongs to the small GTPase superfamily. Rab family. Interacts with EEA1 and INCA1. Interacts with GDI1, GDI2, CHML and CHM; phosphorylation at Ser-85 disrupts this interaction. Requires Mg(2+) as cofactor. Phosphorylation of Ser-85 in the switch II region by LRRK2 prevents the association of RAB regulatory proteins, including CHM, CHML and RAB GDP dissociation inhibitors GDI1 and GDI2.

It is found in the cell membrane. It localises to the early endosome membrane. Its subcellular location is the melanosome. It catalyses the reaction GTP + H2O = GDP + phosphate + H(+). Its activity is regulated as follows. Regulated by guanine nucleotide exchange factors (GEFs) which promote the exchange of bound GDP for free GTP. Regulated by GTPase activating proteins (GAPs) which increase the GTP hydrolysis activity. Inhibited by GDP dissociation inhibitors (GDIs). Its function is as follows. The small GTPases Rab are key regulators of intracellular membrane trafficking, from the formation of transport vesicles to their fusion with membranes. Rabs cycle between an inactive GDP-bound form and an active GTP-bound form that is able to recruit to membranes different sets of downstream effectors directly responsible for vesicle formation, movement, tethering and fusion. The protein is Ras-related protein Rab-5C (RAB5C) of Bos taurus (Bovine).